The primary structure comprises 527 residues: Sulfate adenylyltransferase (527 aa).

The segment at 1–176 (MPIPTPHGGK…LQGINYPKHY (176 aa)) is N-terminal. The segment at 177-406 (DYVDARKTPT…LRETNPPRSK (230 aa)) is catalytic. Glutamine 206 contributes to the sulfate binding site. ATP-binding positions include 206–209 (QTRN) and 302–305 (GRDH). Active-site residues include threonine 207, arginine 208, and asparagine 209. Arginine 208 provides a ligand contact to sulfate. Alanine 306 contacts sulfate. Residue valine 344 coordinates ATP. Residues 407–527 (QGFAILIDNS…VNYLKDQGFY (121 aa)) form a required for oligomerization; adenylyl-sulfate kinase-like region.

Belongs to the sulfate adenylyltransferase family. As to quaternary structure, homohexamer. Dimer of trimers.

It localises to the cytoplasm. It catalyses the reaction sulfate + ATP + H(+) = adenosine 5'-phosphosulfate + diphosphate. It participates in sulfur metabolism; hydrogen sulfide biosynthesis; sulfite from sulfate: step 1/3. Functionally, catalyzes the first intracellular reaction of sulfate assimilation, forming adenosine-5'-phosphosulfate (APS) from inorganic sulfate and ATP. Plays an important role in sulfate activation as a component of the biosynthesis pathway of sulfur-containing amino acids. The polypeptide is Sulfate adenylyltransferase (Candida albicans (strain SC5314 / ATCC MYA-2876) (Yeast)).